The primary structure comprises 158 residues: Protein hunchback (158 aa).

Residues 18–34 (HNHHHHHHHGHHQHQQR) are compositionally biased toward basic residues. Disordered regions lie at residues 18 to 96 (HNHH…TTTA) and 118 to 158 (LTPP…KYMA). Residues 41-50 (ASSPHQSPLP) are compositionally biased toward polar residues. The segment covering 52–65 (LQLEQYLKQQQQQP) has biased composition (low complexity). The segment covering 139-158 (EPEKEHDLMSNSSEDMKYMA) has biased composition (basic and acidic residues).

The protein belongs to the hunchback C2H2-type zinc-finger protein family.

It localises to the nucleus. Its function is as follows. Gap class segmentation protein that controls development of head structures. This is Protein hunchback (hb) from Drosophila mimica (Fruit fly).